We begin with the raw amino-acid sequence, 944 residues long: Isoleucine--tRNA ligase (944 aa).

A 'HIGH' region motif is present at residues 58–68; it reads PYANGSIHIGH. L-isoleucyl-5'-AMP is bound at residue Glu-563. A 'KMSKS' region motif is present at residues 604 to 608; sequence KMSKS. Lys-607 provides a ligand contact to ATP. Residues Cys-907, Cys-910, Cys-927, and Cys-930 each coordinate Zn(2+).

The protein belongs to the class-I aminoacyl-tRNA synthetase family. IleS type 1 subfamily. As to quaternary structure, monomer. The cofactor is Zn(2+).

It is found in the cytoplasm. The enzyme catalyses tRNA(Ile) + L-isoleucine + ATP = L-isoleucyl-tRNA(Ile) + AMP + diphosphate. Functionally, catalyzes the attachment of isoleucine to tRNA(Ile). As IleRS can inadvertently accommodate and process structurally similar amino acids such as valine, to avoid such errors it has two additional distinct tRNA(Ile)-dependent editing activities. One activity is designated as 'pretransfer' editing and involves the hydrolysis of activated Val-AMP. The other activity is designated 'posttransfer' editing and involves deacylation of mischarged Val-tRNA(Ile). The sequence is that of Isoleucine--tRNA ligase from Salmonella typhi.